The chain runs to 238 residues: Ribonuclease PH (238 aa).

Phosphate is bound by residues arginine 86 and 124–126 (GTR).

This sequence belongs to the RNase PH family. In terms of assembly, homodimer. Has a tendency to aggregate into multimers. It depends on Mg(2+) as a cofactor.

The catalysed reaction is tRNA(n+1) + phosphate = tRNA(n) + a ribonucleoside 5'-diphosphate. Functionally, phosphorolytic exoribonuclease that plays an important role in tRNA 3'-end maturation; has no activity on a tRNA precursor with a 3'-terminal phosphate group. In vitro is freely reversible, adds nucleotides to the ends of RNA molecules by using nucleoside diphosphates as substrates, but this may not be physiologically important. Probably plays a role in initiation of 16S rRNA degradation (leading to ribosome degradation) during starvation. In Escherichia coli (strain K12 / MC4100 / BW2952), this protein is Ribonuclease PH.